We begin with the raw amino-acid sequence, 412 residues long: Histidine--tRNA ligase (412 aa).

This sequence belongs to the class-II aminoacyl-tRNA synthetase family. Homodimer.

The protein localises to the cytoplasm. It catalyses the reaction tRNA(His) + L-histidine + ATP = L-histidyl-tRNA(His) + AMP + diphosphate + H(+). The sequence is that of Histidine--tRNA ligase from Maridesulfovibrio salexigens (strain ATCC 14822 / DSM 2638 / NCIMB 8403 / VKM B-1763) (Desulfovibrio salexigens).